We begin with the raw amino-acid sequence, 599 residues long: MKNIRNFSIIAHIDHGKSTLSDRIIQICGGLSDREMEAQVLDSMDLERERGITIKAQSVTLDYKASDGETYQLNFIDTPGHVDFSYEVSRSLAACEGALLVVDAGQGVEAQTLANCYTAMEMDLEVVPVLNKIDLPAADPERVAEEIEDIVGIDATDAVRCSAKTGVGVQDVLERLVRDIPPPEGDPEGPLQALIIDSWFDNYLGVVSLIRIKNGTLRKGDKVKVMSTGQTYNADRLGIFTPKQVDRTELKCGEVGWLVCAIKDIHGAPVGDTLTLARNPAEKALPGFKKVKPQVYAGLFPVSSDDYEAFRDALGKLSLNDASLFYEPESSSALGFGFRCGFLGLLHMEIIQERLEREYDLDLITTAPTVVYEVETTSREVIYVDSPSKLPAVNNIYELREPIAECHMLLPQAYLGNVITLCVEKRGVQTNMVYHGNQVALTYEIPMAEVVLDFFDRLKSTSRGYASLDYNFKRFQASDMVRVDVLINGERVDALALITHRGNSQNRGRELVEKMKDLIPRQQFDIAIQAAIGTHIIARSTVKQLRKNVLAKCYGGDISRKKKLLQKQKEGKKRMKQIGNVELPQEAFLAILHVGKDNK.

A tr-type G domain is found at 2–184; the sequence is KNIRNFSIIA…RLVRDIPPPE (183 aa). Residues 14 to 19 and 131 to 134 each bind GTP; these read DHGKST and NKID.

It belongs to the TRAFAC class translation factor GTPase superfamily. Classic translation factor GTPase family. LepA subfamily.

Its subcellular location is the cell inner membrane. It carries out the reaction GTP + H2O = GDP + phosphate + H(+). Required for accurate and efficient protein synthesis under certain stress conditions. May act as a fidelity factor of the translation reaction, by catalyzing a one-codon backward translocation of tRNAs on improperly translocated ribosomes. Back-translocation proceeds from a post-translocation (POST) complex to a pre-translocation (PRE) complex, thus giving elongation factor G a second chance to translocate the tRNAs correctly. Binds to ribosomes in a GTP-dependent manner. This Escherichia coli (strain UTI89 / UPEC) protein is Elongation factor 4.